Here is a 288-residue protein sequence, read N- to C-terminus: Allergen Asp f 7 homolog (288 aa).

Positions Met1–Ala20 are cleaved as a signal peptide. 2 stretches are compositionally biased toward low complexity: residues Thr48–Val107 and Thr117–Thr129. The interval Thr48 to Gly161 is disordered. Positions Thr130 to Lys151 are enriched in pro residues. N-linked (GlcNAc...) asparagine glycosylation occurs at Asn268.

The protein resides in the secreted. This Arthroderma benhamiae (strain ATCC MYA-4681 / CBS 112371) (Trichophyton mentagrophytes) protein is Allergen Asp f 7 homolog.